Consider the following 375-residue polypeptide: Erythronate-4-phosphate dehydrogenase (375 aa).

Residue S49 coordinates substrate. Residues D150 and T178 each coordinate NAD(+). Residue R211 is part of the active site. Position 231 (D231) interacts with NAD(+). Residue E236 is part of the active site. H253 acts as the Proton donor in catalysis. G256 contacts NAD(+).

Belongs to the D-isomer specific 2-hydroxyacid dehydrogenase family. PdxB subfamily. Homodimer.

Its subcellular location is the cytoplasm. The enzyme catalyses 4-phospho-D-erythronate + NAD(+) = (R)-3-hydroxy-2-oxo-4-phosphooxybutanoate + NADH + H(+). The protein operates within cofactor biosynthesis; pyridoxine 5'-phosphate biosynthesis; pyridoxine 5'-phosphate from D-erythrose 4-phosphate: step 2/5. Catalyzes the oxidation of erythronate-4-phosphate to 3-hydroxy-2-oxo-4-phosphonooxybutanoate. In Hydrogenovibrio crunogenus (strain DSM 25203 / XCL-2) (Thiomicrospira crunogena), this protein is Erythronate-4-phosphate dehydrogenase.